Reading from the N-terminus, the 158-residue chain is NAD(P)H-quinone oxidoreductase subunit N (158 aa).

This sequence belongs to the complex I NdhN subunit family. As to quaternary structure, NDH-1 can be composed of about 15 different subunits; different subcomplexes with different compositions have been identified which probably have different functions.

The protein localises to the cellular thylakoid membrane. It catalyses the reaction a plastoquinone + NADH + (n+1) H(+)(in) = a plastoquinol + NAD(+) + n H(+)(out). The catalysed reaction is a plastoquinone + NADPH + (n+1) H(+)(in) = a plastoquinol + NADP(+) + n H(+)(out). Functionally, NDH-1 shuttles electrons from an unknown electron donor, via FMN and iron-sulfur (Fe-S) centers, to quinones in the respiratory and/or the photosynthetic chain. The immediate electron acceptor for the enzyme in this species is believed to be plastoquinone. Couples the redox reaction to proton translocation, and thus conserves the redox energy in a proton gradient. Cyanobacterial NDH-1 also plays a role in inorganic carbon-concentration. In Prochlorococcus marinus (strain AS9601), this protein is NAD(P)H-quinone oxidoreductase subunit N.